A 432-amino-acid chain; its full sequence is Enolase (432 aa).

Q167 serves as a coordination point for (2R)-2-phosphoglycerate. E209 (proton donor) is an active-site residue. Mg(2+)-binding residues include D246, E287, and D314. The (2R)-2-phosphoglycerate site is built by K339, R368, S369, and K390. The active-site Proton acceptor is K339.

Belongs to the enolase family. Mg(2+) serves as cofactor.

Its subcellular location is the cytoplasm. The protein localises to the secreted. It localises to the cell surface. It catalyses the reaction (2R)-2-phosphoglycerate = phosphoenolpyruvate + H2O. Its pathway is carbohydrate degradation; glycolysis; pyruvate from D-glyceraldehyde 3-phosphate: step 4/5. Catalyzes the reversible conversion of 2-phosphoglycerate (2-PG) into phosphoenolpyruvate (PEP). It is essential for the degradation of carbohydrates via glycolysis. In Prochlorococcus marinus (strain SARG / CCMP1375 / SS120), this protein is Enolase.